A 224-amino-acid chain; its full sequence is Transcriptional regulatory protein DltR (224 aa).

Residues 2 to 116 (RLLVVEDEKS…ELLARIRLRT (115 aa)) form the Response regulatory domain. Asp51 is subject to 4-aspartylphosphate. Residues 124–222 (ANQLRLGNIR…TKGFGYSLEE (99 aa)) constitute a DNA-binding region (ompR/PhoB-type).

In terms of processing, phosphorylated by DltS.

The protein resides in the cytoplasm. In terms of biological role, member of the two-component regulatory system DltS/DltR. Regulates the expression of the dlt operon. The polypeptide is Transcriptional regulatory protein DltR (dltR) (Streptococcus agalactiae serotype III (strain NEM316)).